Here is a 173-residue protein sequence, read N- to C-terminus: Photosystem I assembly protein Ycf3 (173 aa).

TPR repeat units lie at residues 36–69, 73–106, and 121–154; these read AFAY…EQGE, SYIL…NPRL, and GELS…APNN.

It belongs to the Ycf3 family.

It localises to the cellular thylakoid membrane. Its function is as follows. Essential for the assembly of the photosystem I (PSI) complex. May act as a chaperone-like factor to guide the assembly of the PSI subunits. The chain is Photosystem I assembly protein Ycf3 from Synechococcus sp. (strain JA-2-3B'a(2-13)) (Cyanobacteria bacterium Yellowstone B-Prime).